Reading from the N-terminus, the 121-residue chain is Small ribosomal subunit protein uS13 (121 aa).

Residues 97 to 121 (VRGQRTRTNARTRRGARKTVAGKKK) form a disordered region. Positions 100–121 (QRTRTNARTRRGARKTVAGKKK) are enriched in basic residues.

This sequence belongs to the universal ribosomal protein uS13 family. In terms of assembly, part of the 30S ribosomal subunit. Forms a loose heterodimer with protein S19. Forms two bridges to the 50S subunit in the 70S ribosome.

Located at the top of the head of the 30S subunit, it contacts several helices of the 16S rRNA. In the 70S ribosome it contacts the 23S rRNA (bridge B1a) and protein L5 of the 50S subunit (bridge B1b), connecting the 2 subunits; these bridges are implicated in subunit movement. Contacts the tRNAs in the A and P-sites. The chain is Small ribosomal subunit protein uS13 from Synechococcus sp. (strain CC9311).